The sequence spans 202 residues: Thymidylate kinase (202 aa).

An ATP-binding site is contributed by 7-14 (GIDGSGKT).

The protein belongs to the thymidylate kinase family.

The enzyme catalyses dTMP + ATP = dTDP + ADP. Phosphorylation of dTMP to form dTDP in both de novo and salvage pathways of dTTP synthesis. The sequence is that of Thymidylate kinase from Ehrlichia canis (strain Jake).